The chain runs to 236 residues: Small ribosomal subunit protein uS2c (236 aa).

Belongs to the universal ribosomal protein uS2 family.

It localises to the plastid. Its subcellular location is the chloroplast. This chain is Small ribosomal subunit protein uS2c (rps2), found in Guizotia abyssinica (Niger).